Reading from the N-terminus, the 476-residue chain is Serine/threonine-protein kinase Chk1 (476 aa).

The segment at 1–265 is interaction with CLSPN; sequence MAVPFVEDWD…IPDIKKDRWY (265 aa). Residues 9-265 form the Protein kinase domain; sequence WDLVQTLGEG…IPDIKKDRWY (257 aa). ATP contacts are provided by residues 15–23 and K38; that span reads LGEGAYGEV. D130 (proton acceptor) is an active-site residue. A Glycyl lysine isopeptide (Lys-Gly) (interchain with G-Cter in ubiquitin) cross-link involves residue K132. Residues 267-329 are disordered; it reads KPLNRGAKRP…EPRTGLSLWD (63 aa). The residue at position 280 (S280) is a Phosphoserine; by PKB/AKT1. The span at 280–291 shows a compositional bias: low complexity; it reads SGGMSESSSGFS. Phosphoserine is present on residues S286, S296, and S301. The segment covering 298–320 has biased composition (polar residues); the sequence is LDFSPINSGSSEENVKFSSSQPE. 2 positions are modified to phosphoserine; by ATM and ATR: S317 and S345. Positions 391-476 are autoinhibitory region; that stretch reads QCLKETFEKL…SSQKVWFPVT (86 aa). A Glycyl lysine isopeptide (Lys-Gly) (interchain with G-Cter in ubiquitin) cross-link involves residue K436. S463, S467, and S468 each carry phosphoserine.

Belongs to the protein kinase superfamily. CAMK Ser/Thr protein kinase family. NIM1 subfamily. As to quaternary structure, interacts (phosphorylated by ATR) with RAD51. Interacts with and phosphorylates CLSPN, an adapter protein that regulates the ATR-dependent phosphorylation of CHEK1. Interacts with BRCA1. Interacts with and phosphorylates CDC25A, CDC25B and CDC25C. Interacts with FBXO6, which regulates CHEK1. Interacts with PPM1D, which regulates CHEK1 through dephosphorylation. Interacts with TIMELESS; DNA damage-dependent. Interacts with FEM1B; activates CHEK1 in response to stress. Interacts with TLK1. Interacts with XPO1 and YWHAZ. Interacts with CDK5RAP3; antagonizes CHEK1. Post-translationally, phosphorylated by ATR in a RAD17-dependent manner in response to ultraviolet irradiation and inhibition of DNA replication. Phosphorylated by ATM in response to ionizing irradiation. ATM and ATR can both phosphorylate Ser-317 and Ser-345 and this results in enhanced kinase activity. Phosphorylation at Ser-345 induces a change in the conformation of the protein, activates the kinase activity and is a prerequisite for interaction with FBXO6 and subsequent ubiquitination at Lys-436. Phosphorylation at Ser-345 also increases binding to 14-3-3 proteins and promotes nuclear retention. Conversely, dephosphorylation at Ser-345 by PPM1D may contribute to exit from checkpoint mediated cell cycle arrest. Phosphorylation at Ser-280 by AKT1/PKB, may promote mono and/or diubiquitination. Also phosphorylated at undefined residues during mitotic arrest, resulting in decreased activity. In terms of processing, ubiquitinated. Mono or diubiquitination promotes nuclear exclusion. The activated form (phosphorylated on Ser-345) is polyubiquitinated at Lys-436 by some SCF-type E3 ubiquitin ligase complex containing FBXO6 promoting its degradation. Ubiquitination and degradation are required to terminate the checkpoint and ensure that activated CHEK1 does not accumulate as cells progress through S phase, when replication forks encounter transient impediments during normal DNA replication. 'Lys-63'-mediated ubiquitination by TRAF4 at Lys-132 activates cell cycle arrest and activation of DNA repair. Proteolytically cleaved at the C-terminus by SPRTN during normal DNA replication, thereby promoting CHEK1 removal from chromatin and activating the protein kinase activity. Expressed in brain, heart, liver, lung, skeletal muscle, spleen and testis. As to expression, expressed only in liver.

It localises to the nucleus. The protein localises to the chromosome. The protein resides in the cytoplasm. It is found in the cytoskeleton. Its subcellular location is the microtubule organizing center. It localises to the centrosome. It carries out the reaction L-seryl-[protein] + ATP = O-phospho-L-seryl-[protein] + ADP + H(+). It catalyses the reaction L-threonyl-[protein] + ATP = O-phospho-L-threonyl-[protein] + ADP + H(+). Its activity is regulated as follows. Activated through phosphorylation predominantly by ATR but also by ATM in response to DNA damage or inhibition of DNA replication. Activation is modulated by several mediators including CLSPN, BRCA1 and FEM1B. Proteolytic cleavage at the C-terminus by SPRTN during normal DNA replication activates the protein kinase activity. Functionally, serine/threonine-protein kinase which is required for checkpoint-mediated cell cycle arrest and activation of DNA repair in response to the presence of DNA damage or unreplicated DNA. May also negatively regulate cell cycle progression during unperturbed cell cycles. This regulation is achieved by a number of mechanisms that together help to preserve the integrity of the genome. Recognizes the substrate consensus sequence [R-X-X-S/T]. Binds to and phosphorylates CDC25A, CDC25B and CDC25C. Phosphorylation of CDC25A at 'Ser-178' and 'Thr-507' and phosphorylation of CDC25C at 'Ser-216' creates binding sites for 14-3-3 proteins which inhibit CDC25A and CDC25C. Phosphorylation of CDC25A at 'Ser-76', 'Ser-124', 'Ser-178', 'Ser-279' and 'Ser-293' promotes proteolysis of CDC25A. Phosphorylation of CDC25A at 'Ser-76' primes the protein for subsequent phosphorylation at 'Ser-79', 'Ser-82' and 'Ser-88' by NEK11, which is required for polyubiquitination and degradation of CDCD25A. Inhibition of CDC25 leads to increased inhibitory tyrosine phosphorylation of CDK-cyclin complexes and blocks cell cycle progression. Also phosphorylates NEK6. Binds to and phosphorylates RAD51 at 'Thr-309', which promotes the release of RAD51 from BRCA2 and enhances the association of RAD51 with chromatin, thereby promoting DNA repair by homologous recombination. Phosphorylates multiple sites within the C-terminus of TP53, which promotes activation of TP53 by acetylation and promotes cell cycle arrest and suppression of cellular proliferation. Also promotes repair of DNA cross-links through phosphorylation of FANCE. Binds to and phosphorylates TLK1 at 'Ser-743', which prevents the TLK1-dependent phosphorylation of the chromatin assembly factor ASF1A. This may enhance chromatin assembly both in the presence or absence of DNA damage. May also play a role in replication fork maintenance through regulation of PCNA. May regulate the transcription of genes that regulate cell-cycle progression through the phosphorylation of histones. Phosphorylates histone H3.1 (to form H3T11ph), which leads to epigenetic inhibition of a subset of genes. May also phosphorylate RB1 to promote its interaction with the E2F family of transcription factors and subsequent cell cycle arrest. Phosphorylates SPRTN, promoting SPRTN recruitment to chromatin. Reduces replication stress and activates the G2/M checkpoint, by phosphorylating and inactivating PABIR1/FAM122A and promoting the serine/threonine-protein phosphatase 2A-mediated dephosphorylation and stabilization of WEE1 levels and activity. The sequence is that of Serine/threonine-protein kinase Chk1 (Chek1) from Rattus norvegicus (Rat).